The chain runs to 267 residues: DNA repair protein RecO (267 aa).

The protein belongs to the RecO family.

Its function is as follows. Involved in DNA repair and RecF pathway recombination. This chain is DNA repair protein RecO, found in Prochlorococcus marinus (strain MIT 9313).